Reading from the N-terminus, the 530-residue chain is Polyprotein pp62 (530 aa).

It belongs to the asfivirus polyprotein pp62 family. In terms of assembly, monomer. Predominantly exists as a monomer, with very little dimers. Homodimerization seems to be linked to low pH. As to quaternary structure, homodimer; disulfide-linked. Homotrimer; disulfide-linked. Homohexamer. Post-translationally, monoubiquitinated in vitro by viral UBCv1. In terms of processing, specific enzymatic cleavages in vivo yield mature proteins.

Its subcellular location is the host cytoplasm. The protein resides in the host perinuclear region. It is found in the virion. Functionally, essential for the correct assembly and maturation of the core of the virion. In terms of biological role, component of the core shell. Binds to phosphatidylserine, which may enable the core shell binding with the inner membrane. Component of the core shell. Binds to phosphatidylserine and DNA, which may link the core shell to the inner membrane and to the viral nucleoid. Its function is as follows. Component of the core shell. The protein is Polyprotein pp62 of African swine fever virus (isolate Tick/Malawi/Lil 20-1/1983) (ASFV).